The primary structure comprises 214 residues: Adenylate kinase (214 aa).

Position 10–15 (10–15) interacts with ATP; it reads GAGKGT. The segment at 30-59 is NMP; it reads STGDMLRAAIKAGTELGKQAKSVIDAGQLV. AMP is bound by residues threonine 31, arginine 36, 57-59, 85-88, and glutamine 92; these read QLV and GFPR. Residues 122 to 159 form an LID region; that stretch reads GRRAHLASGRTYHNVYNPPKVEGKDDVTGEDLVIREDD. ATP-binding positions include arginine 123 and 132-133; that span reads TY. AMP contacts are provided by arginine 156 and arginine 167. An ATP-binding site is contributed by lysine 200.

It belongs to the adenylate kinase family. In terms of assembly, monomer.

Its subcellular location is the cytoplasm. The enzyme catalyses AMP + ATP = 2 ADP. It functions in the pathway purine metabolism; AMP biosynthesis via salvage pathway; AMP from ADP: step 1/1. In terms of biological role, catalyzes the reversible transfer of the terminal phosphate group between ATP and AMP. Plays an important role in cellular energy homeostasis and in adenine nucleotide metabolism. The sequence is that of Adenylate kinase from Photobacterium profundum (strain SS9).